Reading from the N-terminus, the 321-residue chain is 37 kDa cell surface protein (321 aa).

It is found in the secreted. Its subcellular location is the cell wall. The chain is 37 kDa cell surface protein (CSP37) from Candida albicans (Yeast).